A 166-amino-acid chain; its full sequence is Large ribosomal subunit protein uL10 (166 aa).

It belongs to the universal ribosomal protein uL10 family. Part of the ribosomal stalk of the 50S ribosomal subunit. The N-terminus interacts with L11 and the large rRNA to form the base of the stalk. The C-terminus forms an elongated spine to which L12 dimers bind in a sequential fashion forming a multimeric L10(L12)X complex.

Its function is as follows. Forms part of the ribosomal stalk, playing a central role in the interaction of the ribosome with GTP-bound translation factors. The sequence is that of Large ribosomal subunit protein uL10 from Ectopseudomonas mendocina (strain ymp) (Pseudomonas mendocina).